Consider the following 242-residue polypeptide: Protein FsrB (242 aa).

A run of 5 helical transmembrane segments spans residues 29–49 (LTVY…SVLF), 52–72 (LSET…AGGW), 78–95 (WLCR…PFVL), 100–120 (VSLP…LFYW), and 160–180 (KIAS…LPVT).

It belongs to the AgrB family.

The protein localises to the cell membrane. May be involved in the proteolytic processing of a quorum sensing system signal molecule precursor required for the regulation of the virulence genes for gelatinase (gelE) and a serine protease (sprE). This chain is Protein FsrB (fsrB), found in Enterococcus faecalis (strain ATCC 47077 / OG1RF).